A 520-amino-acid chain; its full sequence is Putative lipase ATG15 (520 aa).

Topologically, residues 1–14 (MLHKSPSRKRFASP) are cytoplasmic. Residues 15-35 (LHLGCILTLTVLCLIAYYFAL) traverse the membrane as a helical; Signal-anchor for type II membrane protein segment. The Lumenal portion of the chain corresponds to 36 to 520 (PDYLSVGKSS…WLGFCTKYEL (485 aa)). Asn-173, Asn-202, and Asn-208 each carry an N-linked (GlcNAc...) asparagine glycan. Ser-332 serves as the catalytic Charge relay system.

Belongs to the AB hydrolase superfamily. Lipase family. Binds to both phosphatidylinositol (PI) and phosphatidylinositol 3,5-bisphosphate (PIP2). Post-translationally, glycosylated.

The protein localises to the endosome. It localises to the multivesicular body membrane. It is found in the prevacuolar compartment membrane. The catalysed reaction is a triacylglycerol + H2O = a diacylglycerol + a fatty acid + H(+). In terms of biological role, lipase which is essential for lysis of subvacuolar cytoplasm to vacuole targeted bodies and intravacuolar autophagic bodies. Involved in the lysis of intravacuolar multivesicular body (MVB) vesicles. The intravacuolar membrane disintegration by ATG15 is critical to life span extension. The sequence is that of Putative lipase ATG15 (ATG15) from Saccharomyces cerevisiae (strain ATCC 204508 / S288c) (Baker's yeast).